Here is a 644-residue protein sequence, read N- to C-terminus: Macrolide export ATP-binding/permease protein MacB (644 aa).

Positions 4–242 (IECKNINRYF…SNVGRIREKA (239 aa)) constitute an ABC transporter domain. ATP is bound at residue 40-47 (GQSGSGKS). Transmembrane regions (helical) follow at residues 270-290 (LLTM…VALG), 524-544 (IALI…LVSV), 574-594 (LICV…SLVF), and 607-627 (AMSV…FGFM).

This sequence belongs to the ABC transporter superfamily. Macrolide exporter (TC 3.A.1.122) family. Homodimer.

It is found in the cell inner membrane. Non-canonical ABC transporter that contains transmembrane domains (TMD), which form a pore in the inner membrane, and an ATP-binding domain (NBD), which is responsible for energy generation. Confers resistance against macrolides. This chain is Macrolide export ATP-binding/permease protein MacB, found in Neisseria meningitidis serogroup B (strain ATCC BAA-335 / MC58).